Reading from the N-terminus, the 568-residue chain is MAAALLLWTAGTVCAAPIPWQSQKFEYVADRKDIKEVLRDLGASQHVMTSISTQVEGSVTGSFNETPQKFLDRMAGTFGFAWYYDGAVLRVTSANEAQSATIALTRASTAQVKRALTRMGIADSRFPIQYDDDSGSIVVSGPPRLVELVRDIAQVIDRGREDANRTVVRAFPLRYAWATDHRVTVNGQSVNIRGVASILNSMYGGDGPSDSGTAPRAQDRRLDSVAPGEASAGRAGTRALSSLGGGKSPLPPGGTGQYVGNSGPYAPPPSGENRLRSDELDDRGSTPIIRADPRSNSVLVRDRADRMAAHQSLIESLDSRPAVLEISASIIDISENALEQLGVDWRLHNSRFDLQTGNGTNTMLNNPGSLDSVATTAGAAAAIAATPAGGVLSAVIGGGSRYLMARISALQQTDQARITANPKVATLDNTEAVMDNRQNFYVPVAGYQSADLYAISAGVSLRVLPMVVMDGGTVRIRMNVHIEDGQITSQQVGNLPITSQSEIDTQALINEGDSLLIAGYSVEQQSKSVDAVPGLSKIPLVGALFRTDQTTGKRFQRMFLVTPRVITP.

An N-terminal signal peptide occupies residues 1 to 15 (MAAALLLWTAGTVCA). The disordered stretch occupies residues 203–292 (YGGDGPSDSG…RGSTPIIRAD (90 aa)). Over residues 243 to 257 (LGGGKSPLPPGGTGQ) the composition is skewed to gly residues. Residues 273-284 (NRLRSDELDDRG) are compositionally biased toward basic and acidic residues.

The protein belongs to the bacterial secretin family. T3SS SctC subfamily. As to quaternary structure, the core secretion machinery of the T3SS is composed of approximately 20 different proteins, including cytoplasmic components, a base, an export apparatus and a needle. This subunit is part of the base, which anchors the injectisome in the bacterial cell envelope. Forms a stable homooligomeric complex.

It is found in the cell outer membrane. Component of the type III secretion system (T3SS), also called injectisome, which is used to inject bacterial effector proteins into eukaryotic host cells. Forms a ring-shaped multimeric structure with an apparent central pore in the outer membrane. This Ralstonia nicotianae (strain ATCC BAA-1114 / GMI1000) (Ralstonia solanacearum) protein is Type 3 secretion system secretin.